The sequence spans 155 residues: E3 ubiquitin-protein ligase RHA2A (155 aa).

Residues 86-128 (CVVCLSKLKEGEEVRKLECRHVFHKKCLEGWLHQFNFTCPLCR) form an RING-type; atypical zinc finger.

Interacts with NAC019 and NAC055. As to expression, expressed in stems, flowers, cauline leaves, rosettes, siliques, seeds and roots.

Its subcellular location is the cytoplasm. It is found in the nucleus. It catalyses the reaction S-ubiquitinyl-[E2 ubiquitin-conjugating enzyme]-L-cysteine + [acceptor protein]-L-lysine = [E2 ubiquitin-conjugating enzyme]-L-cysteine + N(6)-ubiquitinyl-[acceptor protein]-L-lysine.. The protein operates within protein modification; protein ubiquitination. E3 ubiquitin-protein ligase involved in the positive regulation of abscisic acid (ABA) signaling and responses to salt and osmotic stresses during seed germination and early seedling development. Acts additively with RHA2B in regulating ABA signaling and drought response. Possesses E3 ubiquitin ligase activity in vitro. The polypeptide is E3 ubiquitin-protein ligase RHA2A (Arabidopsis thaliana (Mouse-ear cress)).